A 24-amino-acid chain; its full sequence is U1-poneritoxin-Na1a (24 aa).

The protein belongs to the non-disulfide-bridged peptide (NDBP) superfamily. Medium-length antimicrobial peptide (group 3) family. Ponericin-W subfamily. Expressed by the venom gland.

Its subcellular location is the secreted. It is found in the target cell membrane. Its function is as follows. Has a broad spectrum of activity against both Gram-positive and Gram-negative bacteria and S.cerevisiae. Has insecticidal and hemolytic activities. May act by disrupting the integrity of the bacterial cell membrane. This chain is U1-poneritoxin-Na1a, found in Neoponera apicalis (Ant).